Here is a 213-residue protein sequence, read N- to C-terminus: Kynurenine formamidase (213 aa).

A substrate-binding site is contributed by W18. H48, H52, and D54 together coordinate Zn(2+). The active-site Proton donor/acceptor is H58. The Zn(2+) site is built by H160 and E172.

Belongs to the Cyclase 1 superfamily. KynB family. As to quaternary structure, homodimer. Zn(2+) is required as a cofactor.

It catalyses the reaction N-formyl-L-kynurenine + H2O = L-kynurenine + formate + H(+). The protein operates within amino-acid degradation; L-tryptophan degradation via kynurenine pathway; L-kynurenine from L-tryptophan: step 2/2. Its function is as follows. Catalyzes the hydrolysis of N-formyl-L-kynurenine to L-kynurenine, the second step in the kynurenine pathway of tryptophan degradation. This chain is Kynurenine formamidase, found in Burkholderia mallei (strain NCTC 10247).